Consider the following 302-residue polypeptide: Sulfate adenylyltransferase subunit 2 (302 aa).

It belongs to the PAPS reductase family. CysD subfamily. Heterodimer composed of CysD, the smaller subunit, and CysN.

It catalyses the reaction sulfate + ATP + H(+) = adenosine 5'-phosphosulfate + diphosphate. The protein operates within sulfur metabolism; hydrogen sulfide biosynthesis; sulfite from sulfate: step 1/3. With CysN forms the ATP sulfurylase (ATPS) that catalyzes the adenylation of sulfate producing adenosine 5'-phosphosulfate (APS) and diphosphate, the first enzymatic step in sulfur assimilation pathway. APS synthesis involves the formation of a high-energy phosphoric-sulfuric acid anhydride bond driven by GTP hydrolysis by CysN coupled to ATP hydrolysis by CysD. The chain is Sulfate adenylyltransferase subunit 2 from Buchnera aphidicola subsp. Acyrthosiphon pisum (strain 5A).